The following is a 123-amino-acid chain: Large-conductance mechanosensitive channel (123 aa).

2 helical membrane-spanning segments follow: residues 14-34 (VLDL…VTSL) and 67-87 (GNFI…FLLV).

The protein belongs to the MscL family. Homopentamer.

The protein localises to the cell membrane. In terms of biological role, channel that opens in response to stretch forces in the membrane lipid bilayer. May participate in the regulation of osmotic pressure changes within the cell. The protein is Large-conductance mechanosensitive channel of Lacticaseibacillus casei (strain BL23) (Lactobacillus casei).